Here is a 283-residue protein sequence, read N- to C-terminus: Thymidylate synthase (283 aa).

Arginine 22 contributes to the dUMP binding site. The active-site Nucleophile is the cysteine 160. Residues 180 to 183 (RSCD), asparagine 191, and 221 to 223 (HIY) contribute to the dUMP site. A (6R)-5,10-methylene-5,6,7,8-tetrahydrofolate-binding site is contributed by aspartate 183. Serine 282 is a (6R)-5,10-methylene-5,6,7,8-tetrahydrofolate binding site.

This sequence belongs to the thymidylate synthase family. Bacterial-type ThyA subfamily. As to quaternary structure, homodimer.

The protein localises to the cytoplasm. The enzyme catalyses dUMP + (6R)-5,10-methylene-5,6,7,8-tetrahydrofolate = 7,8-dihydrofolate + dTMP. It functions in the pathway pyrimidine metabolism; dTTP biosynthesis. Its function is as follows. Catalyzes the reductive methylation of 2'-deoxyuridine-5'-monophosphate (dUMP) to 2'-deoxythymidine-5'-monophosphate (dTMP) while utilizing 5,10-methylenetetrahydrofolate (mTHF) as the methyl donor and reductant in the reaction, yielding dihydrofolate (DHF) as a by-product. This enzymatic reaction provides an intracellular de novo source of dTMP, an essential precursor for DNA biosynthesis. This is Thymidylate synthase from Haemophilus influenzae (strain ATCC 51907 / DSM 11121 / KW20 / Rd).